We begin with the raw amino-acid sequence, 524 residues long: Sexual development regulator velC (524 aa).

Disordered regions lie at residues Asn114–Ser195, Pro322–Tyr349, Val380–Arg413, and Gly503–Glu524. 2 stretches are compositionally biased toward polar residues: residues Thr131–Gly153 and Leu178–Ser195. A Velvet domain is found at Ser248–Arg500. Residues Pro393–Asp402 show a composition bias toward polar residues.

It belongs to the velvet family. VelC subfamily. In terms of assembly, interacts with vosA.

The protein resides in the nucleus. Its function is as follows. Velvet-domain-containing protein that acts as a positive regulator of sexual development. Positively regulates the production of the sexual fruiting bodies called cleistothecia. This chain is Sexual development regulator velC, found in Emericella nidulans (strain FGSC A4 / ATCC 38163 / CBS 112.46 / NRRL 194 / M139) (Aspergillus nidulans).